A 132-amino-acid polypeptide reads, in one-letter code: Small ribosomal subunit protein uS8 (132 aa).

The protein belongs to the universal ribosomal protein uS8 family. Part of the 30S ribosomal subunit. Contacts proteins S5 and S12.

Functionally, one of the primary rRNA binding proteins, it binds directly to 16S rRNA central domain where it helps coordinate assembly of the platform of the 30S subunit. In Tropheryma whipplei (strain Twist) (Whipple's bacillus), this protein is Small ribosomal subunit protein uS8.